The chain runs to 328 residues: Homoarginine-6-hydroxylase 2-ODD-233 (328 aa).

Positions 183–288 (FWVCRLIGYP…VSVAFFYESN (106 aa)) constitute a Fe2OG dioxygenase domain. 3 residues coordinate Fe cation: histidine 210, aspartate 212, and histidine 268. Arginine 278 is a binding site for 2-oxoglutarate.

It belongs to the iron/ascorbate-dependent oxidoreductase family. Fe(2+) is required as a cofactor. The cofactor is L-ascorbate. Expressed in roots and shoots.

It is found in the cytoplasm. It catalyses the reaction L-homoarginine + 2-oxoglutarate + O2 = 6-hydroxy-L-homoarginine + succinate + CO2. The enzyme catalyses melatonin + 2-oxoglutarate + O2 = 2-hydroxymelatonin + succinate + CO2. Functionally, 2-oxoglutarate-dependent dioxygenase catalyzing homoarginine 6-hydroxylation thus producing 6-hydroxy-L-homoarginine. Guanidine (Gd) is in turn synthesized by the spontaneous conversion of 6-hydroxy-L-homoarginine to (S)-2-amino-6-oxohexanoate (RHEA:79843); guanidine is a nitrogen-rich compound that can serve as a defense or signaling substance. Involved in melatonin degradation. Catalyzes the hydroxylation of melatonin to produce 2-hydroxymelatonin. The chain is Homoarginine-6-hydroxylase 2-ODD-233 from Oryza sativa subsp. japonica (Rice).